A 257-amino-acid polypeptide reads, in one-letter code: Ribosomal RNA small subunit methyltransferase J (257 aa).

S-adenosyl-L-methionine-binding positions include 109–110, 125–126, and Asp179; these read RD and ER.

Belongs to the methyltransferase superfamily. RsmJ family.

The protein resides in the cytoplasm. It carries out the reaction guanosine(1516) in 16S rRNA + S-adenosyl-L-methionine = N(2)-methylguanosine(1516) in 16S rRNA + S-adenosyl-L-homocysteine + H(+). Its function is as follows. Specifically methylates the guanosine in position 1516 of 16S rRNA. The polypeptide is Ribosomal RNA small subunit methyltransferase J (Actinobacillus succinogenes (strain ATCC 55618 / DSM 22257 / CCUG 43843 / 130Z)).